A 479-amino-acid polypeptide reads, in one-letter code: Octopamine receptor (479 aa).

At 1–57 (MGQAATHDANNYTSINYTEIYDVIEDEKDVCAVADEPNIPCSFGISLAVPEWEAICT) the chain is on the extracellular side. 2 N-linked (GlcNAc...) asparagine glycosylation sites follow: Asn-11 and Asn-16. The helical transmembrane segment at 58 to 80 (AIILTMIIISTVVGNILVILSVF) threads the bilayer. Residues 81–90 (TYKPLRIVQN) are Cytoplasmic-facing. A helical transmembrane segment spans residues 91–112 (FFIVSLAVADLTVAILVLPLNV). Over 113–129 (AYSILGQWVFGIYVCKM) the chain is Extracellular. Residues 130–150 (WLTCDIMCCTSSILNLCAIAL) traverse the membrane as a helical segment. Over 151–170 (DRYWAITDPINYAQKRTLER) the chain is Cytoplasmic. The helical transmembrane segment at 171-193 (VLFMIGIVWILSLVISSPPLLGW) threads the bilayer. The Extracellular portion of the chain corresponds to 194–218 (NDWPEVFEPDTPCRLTSQPGFVIFS). The chain crosses the membrane as a helical span at residues 219-240 (SSGSFYIPLVIMTVVYFEIYLA). The Cytoplasmic portion of the chain corresponds to 241 to 407 (TKKRLRDRAK…LTRERRAART (167 aa)). Positions 260 to 319 (GRNKYETKESDPNDQDSVSSDANPNEHQGGTRLVAENEKKHRTRKLTPKKKPKRRYWSKD) are disordered. Over residues 274–287 (QDSVSSDANPNEHQ) the composition is skewed to polar residues. A compositionally biased stretch (basic residues) spans 299-315 (KHRTRKLTPKKKPKRRY). Residues 408–429 (LGIIMGVFVVCWLPFFVIYLVI) traverse the membrane as a helical segment. Topologically, residues 430–441 (PFCVSCCLSNKF) are extracellular. Residues 442 to 462 (INFITWLGYVNSALNPLIYTI) traverse the membrane as a helical segment. At 463–479 (FNMDFRRAFKKLLFIKC) the chain is on the cytoplasmic side.

The protein belongs to the G-protein coupled receptor 1 family.

It is found in the cell membrane. In terms of biological role, receptor for octopamine. Octopamine (OA) is a neurotransmitter, neurohormone, and neuromodulator in invertebrates. The activity of this receptor is mediated by G proteins which activate adenylyl cyclase. This chain is Octopamine receptor, found in Bombyx mori (Silk moth).